A 109-amino-acid polypeptide reads, in one-letter code: MSTTEIEKVVKGASYSALLLNDCGLPITAANIAALFKTAKLNGHETTFKTFEDFLKTNPITNYIGAIGGSAPAAASSAPAKKEEPKKEEPKKEEPKEEETDMDMGDLFG.

The tract at residues 71–109 (APAAASSAPAKKEEPKKEEPKKEEPKEEETDMDMGDLFG) is disordered. The segment covering 80 to 95 (AKKEEPKKEEPKKEEP) has biased composition (basic and acidic residues). Tandem repeats lie at residues 81–85 (KKEEP), 86–90 (KKEEP), and 91–95 (KKEEP). The tract at residues 81–95 (KKEEPKKEEPKKEEP) is 3 X 5 AA tandem repeats of K-K-E-E-P. Over residues 96–109 (KEEETDMDMGDLFG) the composition is skewed to acidic residues.

This sequence belongs to the eukaryotic ribosomal protein P1/P2 family. Post-translationally, not phosphorylated.

This Tetrahymena thermophila protein is Large ribosomal subunit protein P1 (RPLP1).